Consider the following 369-residue polypeptide: Protein VP6 (369 aa).

A disordered region spans residues 20-208 (LEQRSIAPLL…EEAKVGGGDR (189 aa)). The span at 29–66 (LREKNSTEAKSKLKEDGEKKNKSEKEENKIHDDRRVES) shows a compositional bias: basic and acidic residues. Composition is skewed to gly residues over residues 92-111 (TGGG…GGVG) and 162-171 (TSGGLQGRGG). The segment covering 196–208 (TEGEEAKVGGGDR) has biased composition (basic and acidic residues).

The protein belongs to the orbivirus VP6 family.

The protein resides in the virion. The chain is Protein VP6 (S9) from African horse sickness virus 3 (AHSV-3).